The sequence spans 248 residues: Gamma-interferon-inducible lysosomal thiol reductase (248 aa).

The N-terminal stretch at 1–26 is a signal peptide; it reads MSWSPILPFLSLLLLLFPLEVPRAAT. A propeptide spans 27-54 (removed in mature form); that stretch reads ASLSQASSEGTTTCKAHDVCLLGPRPLP. A disulfide bridge links C69 with C72. N-linked (GlcNAc...) asparagine glycans are attached at residues N92 and N105. Residues 231–248 constitute a propeptide, removed in mature form; that stretch reads KPDICSSIADSPRKVCYK.

It belongs to the GILT family. In terms of assembly, dimer; disulfide-linked. Post-translationally, N-glycosylated. Sugar chains contain mannose-6-phosphate. In terms of processing, synthesized as a 35 kDa precursor which is then processed into the mature 30 kDa form via cleavage of N-terminal and C-terminal propeptides. Processing of the precursor is mediated by multiple lysosomal proteases.

The protein resides in the secreted. The protein localises to the lysosome. Lysosomal thiol reductase that can reduce protein disulfide bonds. May facilitate the complete unfolding of proteins destined for lysosomal degradation. Plays an important role in antigen processing. Facilitates the generation of MHC class II-restricted epitodes from disulfide bond-containing antigen by the endocytic reduction of disulfide bonds. Also facilitates MHC class I-restricted recognition of exogenous antigens containing disulfide bonds by CD8+ T-cells or crosspresentation. In Mus musculus (Mouse), this protein is Gamma-interferon-inducible lysosomal thiol reductase (Ifi30).